A 346-amino-acid chain; its full sequence is GTPase Obg (346 aa).

An Obg domain is found at 1-158 (MKFLDQVKIY…RAIWLRLKLI (158 aa)). Residues 159–327 (ADVGLVGLPN…LLREAFALVR (169 aa)) form the OBG-type G domain. GTP is bound by residues 165-172 (GLPNAGKS), 190-194 (FTTLA), 212-215 (DIPG), 279-282 (NKID), and 308-310 (SGF). Residues Ser-172 and Thr-192 each coordinate Mg(2+).

Belongs to the TRAFAC class OBG-HflX-like GTPase superfamily. OBG GTPase family. Monomer. It depends on Mg(2+) as a cofactor.

It is found in the cytoplasm. Functionally, an essential GTPase which binds GTP, GDP and possibly (p)ppGpp with moderate affinity, with high nucleotide exchange rates and a fairly low GTP hydrolysis rate. Plays a role in control of the cell cycle, stress response, ribosome biogenesis and in those bacteria that undergo differentiation, in morphogenesis control. This is GTPase Obg from Phenylobacterium zucineum (strain HLK1).